Reading from the N-terminus, the 117-residue chain is Large ribosomal subunit protein bL20 (117 aa).

This sequence belongs to the bacterial ribosomal protein bL20 family.

In terms of biological role, binds directly to 23S ribosomal RNA and is necessary for the in vitro assembly process of the 50S ribosomal subunit. It is not involved in the protein synthesizing functions of that subunit. This chain is Large ribosomal subunit protein bL20, found in Campylobacter jejuni subsp. jejuni serotype O:6 (strain 81116 / NCTC 11828).